Reading from the N-terminus, the 299-residue chain is Nitrogenase iron protein (299 aa).

An ATP-binding site is contributed by 8–15 (GKGGIGKS). Cys96 provides a ligand contact to [4Fe-4S] cluster. Residue Arg99 is modified to ADP-ribosylarginine; by dinitrogenase reductase ADP-ribosyltransferase. Residue Cys130 participates in [4Fe-4S] cluster binding.

The protein belongs to the NifH/BchL/ChlL family. As to quaternary structure, homodimer. It depends on [4Fe-4S] cluster as a cofactor. The reversible ADP-ribosylation of Arg-99 inactivates the nitrogenase reductase and regulates nitrogenase activity.

It catalyses the reaction N2 + 8 reduced [2Fe-2S]-[ferredoxin] + 16 ATP + 16 H2O = H2 + 8 oxidized [2Fe-2S]-[ferredoxin] + 2 NH4(+) + 16 ADP + 16 phosphate + 6 H(+). In terms of biological role, the key enzymatic reactions in nitrogen fixation are catalyzed by the nitrogenase complex, which has 2 components: the iron protein and the molybdenum-iron protein. This Gloeothece citriformis (strain PCC 7424) (Cyanothece sp. (strain PCC 7424)) protein is Nitrogenase iron protein.